The primary structure comprises 728 residues: FAS1 domain-containing protein fsc1 (728 aa).

The first 21 residues, 1–21 (MNLQFRLYLLFILLFISFANG), serve as a signal peptide directing secretion. The Vacuolar segment spans residues 22–670 (KNEYEDKSTS…TKRQNRWRIT (649 aa)). FAS1 domains follow at residues 29-151 (STSI…DNII) and 154-285 (PPPA…SSLI). Asn89 is a glycosylation site (N-linked (GlcNAc...) asparagine). N-linked (GlcNAc...) asparagine glycans are attached at residues Asn404 and Asn501. Residues 671–691 (FISISGLLLSVGICVLCYKIY) form a helical membrane-spanning segment. The Cytoplasmic portion of the chain corresponds to 692-728 (FKFFRNRFMNQGEREPLLAPADSDTMAGRRNSSSLSV).

The protein localises to the vacuole membrane. In terms of biological role, required for the fusion of autophagosomes with the vacuole. The polypeptide is FAS1 domain-containing protein fsc1 (fsc1) (Schizosaccharomyces pombe (strain 972 / ATCC 24843) (Fission yeast)).